Reading from the N-terminus, the 238-residue chain is Pyridoxine 5'-phosphate synthase (238 aa).

Asparagine 7 provides a ligand contact to 3-amino-2-oxopropyl phosphate. A 1-deoxy-D-xylulose 5-phosphate-binding site is contributed by 9–10; it reads DH. Arginine 18 serves as a coordination point for 3-amino-2-oxopropyl phosphate. The Proton acceptor role is filled by histidine 43. 1-deoxy-D-xylulose 5-phosphate is bound by residues arginine 45 and histidine 50. Glutamate 70 serves as the catalytic Proton acceptor. Threonine 100 serves as a coordination point for 1-deoxy-D-xylulose 5-phosphate. Catalysis depends on histidine 190, which acts as the Proton donor. Residues glycine 191 and 212–213 each bind 3-amino-2-oxopropyl phosphate; that span reads GH.

This sequence belongs to the PNP synthase family. As to quaternary structure, homooctamer; tetramer of dimers.

Its subcellular location is the cytoplasm. It catalyses the reaction 3-amino-2-oxopropyl phosphate + 1-deoxy-D-xylulose 5-phosphate = pyridoxine 5'-phosphate + phosphate + 2 H2O + H(+). Its pathway is cofactor biosynthesis; pyridoxine 5'-phosphate biosynthesis; pyridoxine 5'-phosphate from D-erythrose 4-phosphate: step 5/5. In terms of biological role, catalyzes the complicated ring closure reaction between the two acyclic compounds 1-deoxy-D-xylulose-5-phosphate (DXP) and 3-amino-2-oxopropyl phosphate (1-amino-acetone-3-phosphate or AAP) to form pyridoxine 5'-phosphate (PNP) and inorganic phosphate. This Prochlorococcus marinus subsp. pastoris (strain CCMP1986 / NIES-2087 / MED4) protein is Pyridoxine 5'-phosphate synthase.